Consider the following 49-residue polypeptide: Protein OPG059 (49 aa).

Met1 is a topological domain (virion surface). Residues 2 to 22 (VIGLVIFVSVAAAIVGVLSNV) form a helical membrane-spanning segment. Topologically, residues 23-49 (LDMLMYVEENNEEDARIKEEQELLLLY) are intravirion.

This sequence belongs to the orthopoxvirus OPG058 family.

It localises to the virion membrane. The protein resides in the host membrane. Functionally, may play a role in cell adhesion and is important for virus virulence in vivo, although it is not required for the virus life cycle in cell cultures. In Vaccinia virus (strain Western Reserve) (VACV), this protein is Protein OPG059 (OPG059).